The chain runs to 432 residues: D-amino acid dehydrogenase (432 aa).

3–17 (VLVLGSGVIGTTTAY) is a binding site for FAD.

The protein belongs to the DadA oxidoreductase family. It depends on FAD as a cofactor.

It carries out the reaction a D-alpha-amino acid + A + H2O = a 2-oxocarboxylate + AH2 + NH4(+). It functions in the pathway amino-acid degradation; D-alanine degradation; NH(3) and pyruvate from D-alanine: step 1/1. Its function is as follows. Oxidative deamination of D-amino acids. This Azotobacter vinelandii (strain DJ / ATCC BAA-1303) protein is D-amino acid dehydrogenase.